Consider the following 226-residue polypeptide: Cytidylate kinase (226 aa).

Residue 10 to 18 (GPAGAGKST) participates in ATP binding.

Belongs to the cytidylate kinase family. Type 1 subfamily.

The protein localises to the cytoplasm. The catalysed reaction is CMP + ATP = CDP + ADP. The enzyme catalyses dCMP + ATP = dCDP + ADP. This chain is Cytidylate kinase, found in Caldicellulosiruptor saccharolyticus (strain ATCC 43494 / DSM 8903 / Tp8T 6331).